We begin with the raw amino-acid sequence, 296 residues long: Ribonuclease H2 subunit A (296 aa).

In terms of domain architecture, RNase H type-2 spans 14 to 236 (PCLMGIDEAG…CTTHLKGEVE (223 aa)). Residues Asp-20, Glu-21, and Asp-127 each coordinate a divalent metal cation.

It belongs to the RNase HII family. Eukaryotic subfamily. Mn(2+) is required as a cofactor. Requires Mg(2+) as cofactor.

It catalyses the reaction Endonucleolytic cleavage to 5'-phosphomonoester.. Its function is as follows. Catalytic subunit of RNase HII, an endonuclease that specifically degrades the RNA of RNA:DNA hybrids. Participates in DNA replication, possibly by mediating the removal of lagging-strand Okazaki fragment RNA primers during DNA replication. Mediates the excision of single ribonucleotides from DNA:RNA duplexes. The polypeptide is Ribonuclease H2 subunit A (Arabidopsis thaliana (Mouse-ear cress)).